The sequence spans 235 residues: Fms-related tyrosine kinase 3 ligand (235 aa).

Positions 1–26 are cleaved as a signal peptide; that stretch reads MTVLAPAWSPTTYLLLLLLLSSGLSG. The Extracellular portion of the chain corresponds to 27 to 184; it reads TQDCSFQHSP…EATAPTAPQP (158 aa). Intrachain disulfides connect Cys30–Cys111, Cys70–Cys153, and Cys119–Cys158. Asn126 and Asn149 each carry an N-linked (GlcNAc...) asparagine glycan. The helical transmembrane segment at 185-205 threads the bilayer; that stretch reads PLLLLLLLPVGLLLLAAAWCL. The Cytoplasmic portion of the chain corresponds to 206-235; it reads HWQRTRRRTPRPGEQVPPVPSPQDLLLVEH. Residues 213–235 form a disordered region; sequence RTPRPGEQVPPVPSPQDLLLVEH.

As to quaternary structure, homodimer (isoform 2).

The protein resides in the cell membrane. It is found in the secreted. Functionally, stimulates the proliferation of early hematopoietic cells by activating FLT3. Synergizes well with a number of other colony stimulating factors and interleukins. Required for the development of B cells, and dendritic cells (DCs). In Homo sapiens (Human), this protein is Fms-related tyrosine kinase 3 ligand (FLT3LG).